Here is a 468-residue protein sequence, read N- to C-terminus: Uronate isomerase (468 aa).

This sequence belongs to the metallo-dependent hydrolases superfamily. Uronate isomerase family.

It catalyses the reaction D-glucuronate = D-fructuronate. It carries out the reaction aldehydo-D-galacturonate = keto-D-tagaturonate. The protein operates within carbohydrate metabolism; pentose and glucuronate interconversion. The protein is Uronate isomerase of Bacteroides thetaiotaomicron (strain ATCC 29148 / DSM 2079 / JCM 5827 / CCUG 10774 / NCTC 10582 / VPI-5482 / E50).